A 212-amino-acid chain; its full sequence is Elongation factor Ts (212 aa).

The interval 82–85 (SDFV) is involved in Mg(2+) ion dislocation from EF-Tu.

Belongs to the EF-Ts family.

The protein resides in the cytoplasm. Its function is as follows. Associates with the EF-Tu.GDP complex and induces the exchange of GDP to GTP. It remains bound to the aminoacyl-tRNA.EF-Tu.GTP complex up to the GTP hydrolysis stage on the ribosome. The sequence is that of Elongation factor Ts from Solibacter usitatus (strain Ellin6076).